The sequence spans 472 residues: ATP synthase subunit beta (472 aa).

155-162 (GGAGVGKT) contributes to the ATP binding site.

This sequence belongs to the ATPase alpha/beta chains family. F-type ATPases have 2 components, CF(1) - the catalytic core - and CF(0) - the membrane proton channel. CF(1) has five subunits: alpha(3), beta(3), gamma(1), delta(1), epsilon(1). CF(0) has three main subunits: a(1), b(2) and c(9-12). The alpha and beta chains form an alternating ring which encloses part of the gamma chain. CF(1) is attached to CF(0) by a central stalk formed by the gamma and epsilon chains, while a peripheral stalk is formed by the delta and b chains.

It is found in the cell inner membrane. The catalysed reaction is ATP + H2O + 4 H(+)(in) = ADP + phosphate + 5 H(+)(out). Its function is as follows. Produces ATP from ADP in the presence of a proton gradient across the membrane. The catalytic sites are hosted primarily by the beta subunits. The protein is ATP synthase subunit beta of Fervidobacterium nodosum (strain ATCC 35602 / DSM 5306 / Rt17-B1).